An 804-amino-acid polypeptide reads, in one-letter code: Exocyst complex component 6 (804 aa).

This sequence belongs to the SEC15 family. In terms of assembly, the exocyst complex is composed of EXOC1, EXOC2, EXOC3, EXOC4, EXOC5, EXOC6, EXOC7 and EXOC8. Interacts with CNTRL. Interacts with RAB11A in a GTP-dependent manner.

The protein localises to the cytoplasm. It localises to the perinuclear region. Its subcellular location is the cell projection. The protein resides in the growth cone. It is found in the midbody. The protein localises to the midbody ring. In terms of biological role, component of the exocyst complex involved in the docking of exocytic vesicles with fusion sites on the plasma membrane. Together with RAB11A, RAB3IP, RAB8A, PARD3, PRKCI, ANXA2, CDC42 and DNMBP promotes transcytosis of PODXL to the apical membrane initiation sites (AMIS), apical surface formation and lumenogenesis. The polypeptide is Exocyst complex component 6 (EXOC6) (Homo sapiens (Human)).